The primary structure comprises 449 residues: Pentalenene oxygenase (449 aa).

A helical membrane pass occupies residues 251–273 (VITVMAAGTETVAGTLTWIFHLL). Heme is bound at residue Cys-393.

It belongs to the cytochrome P450 family.

It is found in the membrane. It carries out the reaction pentalenene + 4 reduced [2Fe-2S]-[ferredoxin] + 2 O2 + 4 H(+) = pentalen-13-al + 4 oxidized [2Fe-2S]-[ferredoxin] + 3 H2O. Its pathway is antibiotic biosynthesis; neopentalenolactone biosynthesis. Functionally, catalyzes the conversion of pentalenene to pentalen-13-al by stepwise oxidation via pentalen-13-ol, a precursor of neopentalenolactone antibiotic. The sequence is that of Pentalenene oxygenase (ptlI) from Streptomyces avermitilis (strain ATCC 31267 / DSM 46492 / JCM 5070 / NBRC 14893 / NCIMB 12804 / NRRL 8165 / MA-4680).